Reading from the N-terminus, the 274-residue chain is Aspartate/glutamate leucyltransferase (274 aa).

It belongs to the R-transferase family. Bpt subfamily.

The protein localises to the cytoplasm. It carries out the reaction N-terminal L-glutamyl-[protein] + L-leucyl-tRNA(Leu) = N-terminal L-leucyl-L-glutamyl-[protein] + tRNA(Leu) + H(+). The enzyme catalyses N-terminal L-aspartyl-[protein] + L-leucyl-tRNA(Leu) = N-terminal L-leucyl-L-aspartyl-[protein] + tRNA(Leu) + H(+). Functions in the N-end rule pathway of protein degradation where it conjugates Leu from its aminoacyl-tRNA to the N-termini of proteins containing an N-terminal aspartate or glutamate. This is Aspartate/glutamate leucyltransferase from Ruegeria sp. (strain TM1040) (Silicibacter sp.).